Here is a 217-residue protein sequence, read N- to C-terminus: Nucleoredoxin-like protein 1 (217 aa).

In terms of domain architecture, Thioredoxin spans 1–164; the sequence is MASLFSGRIL…AAELLDRSFL (164 aa). Positions 188–204 are enriched in basic and acidic residues; the sequence is VDRDVGRERGRNGRDSG. The tract at residues 188–217 is disordered; it reads VDRDVGRERGRNGRDSGDPQGDAGTRAELW.

This sequence belongs to the nucleoredoxin family. Interacts with isoform 1 of BSG. As to expression, expressed in the retina (at protein level). Expressed predominantly by photoreceptors in both the inner and outer nuclear layer (at protein level). Not expressed in the testis, spleen, intestine, lung, cerebellum, or kidney.

It localises to the cell projection. The protein localises to the cilium. The protein resides in the photoreceptor outer segment. In terms of biological role, plays an important role in retinal cone photoreceptor survival. In association with glucose transporter SLC16A1/GLUT1 and BSG, promotes retinal cone survival by enhancing aerobic glycolysis and accelerating the entry of glucose into photoreceptors. May play a role in cone cell viability, slowing down cone degeneration, does not seem to play a role in degenerating rods. The polypeptide is Nucleoredoxin-like protein 1 (Nxnl1) (Mus musculus (Mouse)).